Reading from the N-terminus, the 578-residue chain is 15-cis-phytoene desaturase, chloroplastic/chromoplastic (578 aa).

The N-terminal 87 residues, 1 to 87, are a transit peptide targeting the chloroplast and chromoplast; that stretch reads MDTGCLSSMN…PLENTINFLE (87 aa). FAD is bound by residues alanine 115, 134 to 135, lysine 142, 159 to 160, and tyrosine 165; these read EA and HI. Arginine 300 serves as a coordination point for substrate. FAD is bound by residues isoleucine 342 and aspartate 531. Residue alanine 539 participates in substrate binding. Methionine 541 is a binding site for FAD.

Belongs to the carotenoid/retinoid oxidoreductase family. As to quaternary structure, homotetramer. Homotetramer is the active form of the enzyme. It depends on FAD as a cofactor.

It localises to the plastid. The protein resides in the chloroplast. The protein localises to the chromoplast. It is found in the membrane. It carries out the reaction 2 a plastoquinone + 15-cis-phytoene = 9,9',15-tri-cis-zeta-carotene + 2 a plastoquinol. It participates in carotenoid biosynthesis; lycopene biosynthesis. With respect to regulation, inhibited by the herbicide norflurazon (NFZ). Functionally, converts phytoene into zeta-carotene via the intermediary of phytofluene by the symmetrical introduction of two double bonds at the C-11 and C-11' positions of phytoene with a concomitant isomerization of two neighboring double bonds at the C9 and C9' positions from trans to cis. Active with decylplastoquinone (DPQ) as substrate. Also active with other benzoquinones, which are strongly preferred over naphthoquinones as substrates. The polypeptide is 15-cis-phytoene desaturase, chloroplastic/chromoplastic (PDS1) (Oryza sativa subsp. indica (Rice)).